We begin with the raw amino-acid sequence, 555 residues long: Perforin-1 (555 aa).

The first 21 residues, 1-21 (MAARLLLLGILLLLLPLPVPA), serve as a signal peptide directing secretion. Intrachain disulfides connect Cys-23-Cys-76, Cys-31-Cys-73, and Cys-102-Cys-176. The 349-residue stretch at 27–375 (ARSECKRSHK…QYLTDRARWR (349 aa)) folds into the MACPF domain. A beta stranded transmembrane segment spans residues 129–149 (WKVGLDVTPKPTSNVHVSVAG). An N-linked (GlcNAc...) asparagine glycan is attached at Asn-205. 4 disulfide bridges follow: Cys-242-Cys-408, Cys-377-Cys-393, Cys-381-Cys-395, and Cys-397-Cys-407. Residues 257-279 (CLTVEAQVNIGIHGSISAEAKAC) traverse the membrane as a beta stranded segment. One can recognise an EGF-like domain in the interval 376–408 (DCSRPCPPGRQKSPRDPCQCVCHGSAVTTQDCC). The C2 domain occupies 397 to 519 (CHGSAVTTQD…CNLNHGHLKF (123 aa)). Residues Gly-429, Asp-430, Thr-433, Ala-434, Asp-436, Asp-484, Asp-486, Asp-490, Asp-491, and Asp-492 each contribute to the Ca(2+) site. Intrachain disulfides connect Cys-497/Cys-510 and Cys-525/Cys-534. The N-linked (GlcNAc...) asparagine glycan is linked to Asn-549.

Belongs to the complement C6/C7/C8/C9 family. In terms of assembly, monomer, as soluble protein. Homooligomer; homooligomerizes to form a pore-forming ring. It depends on Ca(2+) as a cofactor. Post-translationally, N-glycosylated.

Its subcellular location is the cytolytic granule. It is found in the secreted. The protein localises to the cell membrane. It localises to the endosome lumen. Pore-forming protein that plays a key role in granzyme-mediated programmed cell death, and in defense against virus-infected or neoplastic cells. Plays an important role in killing other cells that are recognized as non-self by the immune system, e.g. in transplant rejection or some forms of autoimmune disease. Can insert into the membrane of target cells in its calcium-bound form, oligomerize and form large pores. Promotes cytolysis and apoptosis of target cells by mediating the passage and uptake of cytotoxic granzymes. Facilitates the delivery of cationic cargo protein, while anionic or neural proteins are not delivered efficiently. Perforin pores allow the release of mature caspase-7 (CASP7) into the extracellular milieu. The chain is Perforin-1 (PRF1) from Homo sapiens (Human).